The sequence spans 492 residues: 2-succinylbenzoate--CoA ligase (492 aa).

Belongs to the ATP-dependent AMP-binding enzyme family. MenE subfamily.

It catalyses the reaction 2-succinylbenzoate + ATP + CoA = 2-succinylbenzoyl-CoA + AMP + diphosphate. Its pathway is quinol/quinone metabolism; 1,4-dihydroxy-2-naphthoate biosynthesis; 1,4-dihydroxy-2-naphthoate from chorismate: step 5/7. The protein operates within quinol/quinone metabolism; menaquinone biosynthesis. Its function is as follows. Converts 2-succinylbenzoate (OSB) to 2-succinylbenzoyl-CoA (OSB-CoA). The polypeptide is 2-succinylbenzoate--CoA ligase (Staphylococcus aureus (strain MSSA476)).